A 175-amino-acid chain; its full sequence is Co-chaperone protein HscB homolog (175 aa).

In terms of domain architecture, J spans 7 to 79 (SHFDLFHLPA…LKRATYLLSL (73 aa)).

It belongs to the HscB family. As to quaternary structure, interacts with HscA and stimulates its ATPase activity.

Its function is as follows. Co-chaperone involved in the maturation of iron-sulfur cluster-containing proteins. Seems to help targeting proteins to be folded toward HscA. The chain is Co-chaperone protein HscB homolog from Burkholderia multivorans (strain ATCC 17616 / 249).